The primary structure comprises 904 residues: Dual specificity tyrosine-phosphorylation-regulated kinase mbk-1 (904 aa).

3 disordered regions span residues 1–151 (MNSG…MPPE), 250–272 (TVGRHTSLDSSGKPKTGKEASSS), and 285–345 (AVPN…YNNG). The span at 9 to 23 (NLQAWGQQPSSSYSN) shows a compositional bias: polar residues. A compositionally biased stretch (low complexity) spans 24–35 (TQQQHGQITGQI). Over residues 59–75 (ELEKSKKIAEQPTEHPQ) the composition is skewed to basic and acidic residues. Positions 112–123 (NNSNSQNFFPQQ) are enriched in low complexity. Residues 286 to 297 (VPNTSSSGNQPH) show a composition bias toward polar residues. The Protein kinase domain maps to 367 to 690 (ILSDTPVGKG…TLFPVSHTAY (324 aa)). Residues 373–381 (VGKGSFGQV) and Lys396 contribute to the ATP site. Asp495 acts as the Proton acceptor in catalysis. Disordered stretches follow at residues 717–830 (YRPV…DQAE) and 881–904 (MSHGNVNAGSSRDMEKHDYPNNKL). Residues 721-733 (PTSSHPISVTSSF) are compositionally biased toward polar residues. Residues 749-820 (SQQNYHNPNY…VQQHSSSSSR (72 aa)) are compositionally biased toward low complexity. Positions 881-890 (MSHGNVNAGS) are enriched in polar residues. Residues 892–904 (RDMEKHDYPNNKL) are compositionally biased toward basic and acidic residues.

This sequence belongs to the protein kinase superfamily. CMGC Ser/Thr protein kinase family. MNB/DYRK subfamily. The cofactor is Mg(2+).

It is found in the nucleus. The catalysed reaction is L-seryl-[protein] + ATP = O-phospho-L-seryl-[protein] + ADP + H(+). It catalyses the reaction L-threonyl-[protein] + ATP = O-phospho-L-threonyl-[protein] + ADP + H(+). The enzyme catalyses L-tyrosyl-[protein] + ATP = O-phospho-L-tyrosyl-[protein] + ADP + H(+). In terms of biological role, possible role in the function of olfactory neurons. In Caenorhabditis briggsae, this protein is Dual specificity tyrosine-phosphorylation-regulated kinase mbk-1.